A 528-amino-acid chain; its full sequence is Probable serine protease HtrA1 (528 aa).

The interval methionine 1 to valine 70 is disordered. Residues methionine 1–tyrosine 178 lie on the Cytoplasmic side of the membrane. Residues asparagine 31–arginine 40 show a composition bias toward gly residues. The chain crosses the membrane as a helical span at residues leucine 179–glycine 199. The Periplasmic portion of the chain corresponds to arginine 200–threonine 528. Catalysis depends on charge relay system residues histidine 270, aspartate 306, and serine 387. Residues leucine 426 to valine 487 form the PDZ domain.

Belongs to the peptidase S1C family. In terms of assembly, the C-terminal region exhibits both monomeric and trimeric forms in solution.

The protein resides in the cell inner membrane. It catalyses the reaction Acts on substrates that are at least partially unfolded. The cleavage site P1 residue is normally between a pair of hydrophobic residues, such as Val-|-Val.. Essential protein that may act as a regulatory protease that is conditionally activated upon appropriate environmental triggers. The chain is Probable serine protease HtrA1 from Mycobacterium tuberculosis (strain ATCC 25618 / H37Rv).